A 422-amino-acid polypeptide reads, in one-letter code: Kynurenine--oxoglutarate transaminase 1 (422 aa).

2 residues coordinate substrate: glycine 36 and asparagine 185. Lysine 247 carries the N6-(pyridoxal phosphate)lysine modification. A substrate-binding site is contributed by arginine 398.

This sequence belongs to the class-I pyridoxal-phosphate-dependent aminotransferase family. Homodimer. Pyridoxal 5'-phosphate is required as a cofactor.

It localises to the cytoplasm. The protein resides in the cytosol. The enzyme catalyses L-kynurenine + 2-oxoglutarate = kynurenate + L-glutamate + H2O. It carries out the reaction 3-phenylpyruvate + L-glutamine = 2-oxoglutaramate + L-phenylalanine. The catalysed reaction is an S-substituted L-cysteine + H2O = a thiol + pyruvate + NH4(+). The protein operates within amino-acid degradation; L-kynurenine degradation; kynurenate from L-kynurenine: step 1/2. With respect to regulation, inhibited by tryptophan, indole-3-pyruvic acid, 3-indolepropionic acid, DL-indole-3-lactic acid, indole-3-acetic acid (IAC), amino-oxyacetate (AOAA), aminooxy-phenylpropionic acid (AOPP) and Tris. Catalyzes the irreversible transamination of the L-tryptophan metabolite L-kynurenine to form kynurenic acid (KA), an intermediate in the tryptophan catabolic pathway which is also a broad spectrum antagonist of the three ionotropic excitatory amino acid receptors among others. Also metabolizes the cysteine conjugates of certain halogenated alkenes and alkanes to form reactive metabolites. Catalyzes the beta-elimination of S-conjugates and Se-conjugates of L-(seleno)cysteine, resulting in the cleavage of the C-S or C-Se bond. In Homo sapiens (Human), this protein is Kynurenine--oxoglutarate transaminase 1.